Here is a 308-residue protein sequence, read N- to C-terminus: Ribonuclease HIII (308 aa).

In terms of domain architecture, RNase H type-2 spans 91–308 (KNVIGSDEVG…TEKALKMVKK (218 aa)). A divalent metal cation is bound by residues Asp97, Glu98, and Asp202.

Belongs to the RNase HII family. RnhC subfamily. Requires Mn(2+) as cofactor. The cofactor is Mg(2+).

It is found in the cytoplasm. The catalysed reaction is Endonucleolytic cleavage to 5'-phosphomonoester.. Functionally, endonuclease that specifically degrades the RNA of RNA-DNA hybrids. The protein is Ribonuclease HIII of Listeria monocytogenes serotype 4b (strain CLIP80459).